The sequence spans 259 residues: Archaerhodopsin-2 (259 aa).

The propeptide occupies 1–6; it reads MDPIAL. Pyrrolidone carboxylic acid is present on Gln7. At 7 to 18 the chain is on the extracellular side; that stretch reads QAGFDLLNDGRP. The helical transmembrane segment at 19–40 threads the bilayer; sequence ETLWLGIGTLLMLIGTFYFIAR. Over 41 to 49 the chain is Cytoplasmic; it reads GWGVTDKEA. A helical transmembrane segment spans residues 50 to 71; the sequence is REYYAITILVPGIASAAYLAMF. Residues 72–90 lie on the Extracellular side of the membrane; sequence FGIGVTEVELASGTVLDIY. A helical membrane pass occupies residues 91–112; it reads YARYADWLFTTPLLLLDLALLA. Over 113-115 the chain is Cytoplasmic; the sequence is KVD. The chain crosses the membrane as a helical span at residues 116 to 138; sequence RVTIGTLIGVDALMIVTGLIGAL. The Extracellular segment spans residues 139 to 142; that stretch reads SKTP. A helical transmembrane segment spans residues 143 to 171; the sequence is LARYTWWLFSTIAFLFVLYYLLTSLRSAA. Topologically, residues 172–174 are cytoplasmic; it reads AKR. A helical transmembrane segment spans residues 175–203; it reads SEEVRSTFNTLTALVAVLWTAYPILWIVG. The Extracellular portion of the chain corresponds to 204-211; it reads TEGAGVVG. Residues 212–244 form a helical membrane-spanning segment; sequence LGIETLAFMVLDVTAKVGFGFVLLRSRAILGET. At Lys227 the chain carries N6-(retinylidene)lysine. The Cytoplasmic portion of the chain corresponds to 245 to 259; sequence EAPEPSAGADASAAD.

It belongs to the archaeal/bacterial/fungal opsin family.

The protein localises to the cell membrane. Functionally, light-driven proton pump. It may interact with bacterioruberin in the claret membrane. The polypeptide is Archaerhodopsin-2 (Halobacterium sp. (strain aus-2)).